Reading from the N-terminus, the 425-residue chain is Adenylosuccinate synthetase (425 aa).

Residues 12 to 18 (GDEGKGK) and 40 to 42 (GHT) each bind GTP. D13 functions as the Proton acceptor in the catalytic mechanism. Mg(2+) is bound by residues D13 and G40. Residues 13–16 (DEGK), 38–41 (NAGH), T127, R141, Q222, T237, and R301 each bind IMP. The active-site Proton donor is H41. A substrate-binding site is contributed by 297–303 (AVTGRPR). GTP-binding positions include R303, 329-331 (KID), and 411-413 (SVG).

Belongs to the adenylosuccinate synthetase family. In terms of assembly, homodimer. The cofactor is Mg(2+).

Its subcellular location is the cytoplasm. It catalyses the reaction IMP + L-aspartate + GTP = N(6)-(1,2-dicarboxyethyl)-AMP + GDP + phosphate + 2 H(+). Its pathway is purine metabolism; AMP biosynthesis via de novo pathway; AMP from IMP: step 1/2. Plays an important role in the de novo pathway of purine nucleotide biosynthesis. Catalyzes the first committed step in the biosynthesis of AMP from IMP. The sequence is that of Adenylosuccinate synthetase from Fusobacterium nucleatum subsp. nucleatum (strain ATCC 25586 / DSM 15643 / BCRC 10681 / CIP 101130 / JCM 8532 / KCTC 2640 / LMG 13131 / VPI 4355).